We begin with the raw amino-acid sequence, 289 residues long: Acetyl-coenzyme A carboxylase carboxyl transferase subunit beta (289 aa).

In terms of domain architecture, CoA carboxyltransferase N-terminal spans 23-289; the sequence is HWIKCPSCSA…YDENPCLLHL (267 aa). The Zn(2+) site is built by Cys27, Cys30, Cys46, and Cys49. The C4-type zinc finger occupies 27 to 49; the sequence is CPSCSALMYYKEVIAQHHVCPKC.

This sequence belongs to the AccD/PCCB family. In terms of assembly, acetyl-CoA carboxylase is a heterohexamer composed of biotin carboxyl carrier protein (AccB), biotin carboxylase (AccC) and two subunits each of ACCase subunit alpha (AccA) and ACCase subunit beta (AccD). Requires Zn(2+) as cofactor.

The protein resides in the cytoplasm. The enzyme catalyses N(6)-carboxybiotinyl-L-lysyl-[protein] + acetyl-CoA = N(6)-biotinyl-L-lysyl-[protein] + malonyl-CoA. It functions in the pathway lipid metabolism; malonyl-CoA biosynthesis; malonyl-CoA from acetyl-CoA: step 1/1. Functionally, component of the acetyl coenzyme A carboxylase (ACC) complex. Biotin carboxylase (BC) catalyzes the carboxylation of biotin on its carrier protein (BCCP) and then the CO(2) group is transferred by the transcarboxylase to acetyl-CoA to form malonyl-CoA. This is Acetyl-coenzyme A carboxylase carboxyl transferase subunit beta from Wolinella succinogenes (strain ATCC 29543 / DSM 1740 / CCUG 13145 / JCM 31913 / LMG 7466 / NCTC 11488 / FDC 602W) (Vibrio succinogenes).